Reading from the N-terminus, the 112-residue chain is UPF0102 protein C8J_0145 (112 aa).

The protein belongs to the UPF0102 family.

This is UPF0102 protein C8J_0145 from Campylobacter jejuni subsp. jejuni serotype O:6 (strain 81116 / NCTC 11828).